A 187-amino-acid chain; its full sequence is RNA 2',3'-cyclic phosphodiesterase (187 aa).

His40 acts as the Proton donor in catalysis. 2 consecutive short sequence motifs (HXTX) follow at residues 40–43 (HLTL) and 125–128 (HITI). The active-site Proton acceptor is His125.

This sequence belongs to the 2H phosphoesterase superfamily. ThpR family.

It carries out the reaction a 3'-end 2',3'-cyclophospho-ribonucleotide-RNA + H2O = a 3'-end 2'-phospho-ribonucleotide-RNA + H(+). In terms of biological role, hydrolyzes RNA 2',3'-cyclic phosphodiester to an RNA 2'-phosphomonoester. This Thermotoga maritima (strain ATCC 43589 / DSM 3109 / JCM 10099 / NBRC 100826 / MSB8) protein is RNA 2',3'-cyclic phosphodiesterase.